A 141-amino-acid chain; its full sequence is Large ribosomal subunit protein uL11 (141 aa).

The protein belongs to the universal ribosomal protein uL11 family. In terms of assembly, part of the ribosomal stalk of the 50S ribosomal subunit. Interacts with L10 and the large rRNA to form the base of the stalk. L10 forms an elongated spine to which L12 dimers bind in a sequential fashion forming a multimeric L10(L12)X complex. In terms of processing, one or more lysine residues are methylated.

Functionally, forms part of the ribosomal stalk which helps the ribosome interact with GTP-bound translation factors. The protein is Large ribosomal subunit protein uL11 of Clostridium botulinum (strain Kyoto / Type A2).